Consider the following 150-residue polypeptide: Avidin-related protein 3 (150 aa).

Residues 1-24 form the signal peptide; that stretch reads MVHTTSPLLLLLLLSLALVAPSLS. The Avidin-like domain maps to 26–147; sequence RKCSLTGKWT…GYNNFTRQRT (122 aa). Residues Cys-28 and Cys-105 are joined by a disulfide bond. Biotin contacts are provided by Asn-36, Ser-40, Tyr-57, Thr-59, and Asp-63. A glycan (N-linked (GlcNAc...) asparagine) is linked at Asn-93. Biotin-binding residues include Ser-95, Ser-99, and Asn-140. N-linked (GlcNAc...) asparagine glycosylation is present at Asn-141.

Belongs to the avidin/streptavidin family. As to quaternary structure, homotetramer. Glycosylated.

The protein localises to the secreted. Functionally, forms a strong non-covalent specific complex with biotin. This chain is Avidin-related protein 3 (AVR3), found in Gallus gallus (Chicken).